A 250-amino-acid chain; its full sequence is MSTSAADTLSRPSVRPAGRAVDALRPFSLERGFTRYAEGSVLVRAGNTHVLCTASVLEKVPPFLKGRGEGWVTAEYGMLPRATHTRGDREAARGKQSGRTQEIQRLIGRSLRAVFDLRLLGERTLHLDCDVLQADGGTRCASITGAWVAAADAVALLMQRGDLAHNPIRDAVAAVSVGLVDGRAVLDLDYQEDSACAADVNVVMTGSGAFVEVQGTGEGATFTRGELDTMLGLAEGGIAQLVRAQREALQ.

Residues Arg99 and 137-139 (GTR) contribute to the phosphate site.

The protein belongs to the RNase PH family. Homohexameric ring arranged as a trimer of dimers.

It catalyses the reaction tRNA(n+1) + phosphate = tRNA(n) + a ribonucleoside 5'-diphosphate. Functionally, phosphorolytic 3'-5' exoribonuclease that plays an important role in tRNA 3'-end maturation. Removes nucleotide residues following the 3'-CCA terminus of tRNAs; can also add nucleotides to the ends of RNA molecules by using nucleoside diphosphates as substrates, but this may not be physiologically important. Probably plays a role in initiation of 16S rRNA degradation (leading to ribosome degradation) during starvation. The protein is Ribonuclease PH of Bordetella parapertussis (strain 12822 / ATCC BAA-587 / NCTC 13253).